A 206-amino-acid chain; its full sequence is Triosephosphate isomerase (206 aa).

The active-site Electrophile is His76. The Proton acceptor role is filled by Glu146.

Belongs to the triosephosphate isomerase family. In terms of assembly, homodimer.

The enzyme catalyses D-glyceraldehyde 3-phosphate = dihydroxyacetone phosphate. It functions in the pathway carbohydrate biosynthesis; gluconeogenesis. The protein operates within carbohydrate degradation; glycolysis; D-glyceraldehyde 3-phosphate from glycerone phosphate: step 1/1. The polypeptide is Triosephosphate isomerase (Tpi) (Anopheles merus (Mosquito)).